The sequence spans 338 residues: Anthranilate phosphoribosyltransferase (338 aa).

5-phospho-alpha-D-ribose 1-diphosphate is bound by residues Gly81, 84 to 85 (GD), Ser89, 91 to 94 (NVST), 109 to 117 (KHGNRALSS), and Ala121. Gly81 serves as a coordination point for anthranilate. Ser93 contributes to the Mg(2+) binding site. Asn112 is a binding site for anthranilate. Residue Arg167 coordinates anthranilate. Asp226 and Glu227 together coordinate Mg(2+).

This sequence belongs to the anthranilate phosphoribosyltransferase family. In terms of assembly, homodimer. The cofactor is Mg(2+).

The catalysed reaction is N-(5-phospho-beta-D-ribosyl)anthranilate + diphosphate = 5-phospho-alpha-D-ribose 1-diphosphate + anthranilate. Its pathway is amino-acid biosynthesis; L-tryptophan biosynthesis; L-tryptophan from chorismate: step 2/5. Its function is as follows. Catalyzes the transfer of the phosphoribosyl group of 5-phosphorylribose-1-pyrophosphate (PRPP) to anthranilate to yield N-(5'-phosphoribosyl)-anthranilate (PRA). In Rhodopseudomonas palustris (strain ATCC BAA-98 / CGA009), this protein is Anthranilate phosphoribosyltransferase.